The following is a 333-amino-acid chain: Transaldolase NQM1 (333 aa).

Lysine 144 functions as the Schiff-base intermediate with substrate in the catalytic mechanism.

It belongs to the transaldolase family. Type 1 subfamily. As to quaternary structure, homodimer.

The enzyme catalyses D-sedoheptulose 7-phosphate + D-glyceraldehyde 3-phosphate = D-erythrose 4-phosphate + beta-D-fructose 6-phosphate. Its pathway is carbohydrate degradation; pentose phosphate pathway; D-glyceraldehyde 3-phosphate and beta-D-fructose 6-phosphate from D-ribose 5-phosphate and D-xylulose 5-phosphate (non-oxidative stage): step 2/3. In terms of biological role, transaldolase is important for the balance of metabolites in the pentose-phosphate pathway. The sequence is that of Transaldolase NQM1 (NQM1) from Saccharomyces cerevisiae (strain ATCC 204508 / S288c) (Baker's yeast).